The primary structure comprises 210 residues: Dynactin-associated protein (210 aa).

The Cytoplasmic segment spans residues 1 to 113 (MVADIKGNEQ…YCRNDWSMWK (113 aa)). Residues 114 to 134 (VFLACLLACVIMTAIGVLIIC) form a helical; Signal-anchor for type II membrane protein membrane-spanning segment. The Extracellular portion of the chain corresponds to 135–210 (LVNNKGSANS…PITVAPTDHL (76 aa)). The interval 168-210 (ACPPTMTTTSTVPASTATESTTSTATAATTSTEPITVAPTDHL) is disordered. The span at 171–203 (PTMTTTSTVPASTATESTTSTATAATTSTEPIT) shows a compositional bias: low complexity.

In terms of assembly, interacts with DCTN1 and DCTN2. In terms of tissue distribution, expressed in fibroblast and numerous cancer cell lines (at protein level).

The protein resides in the golgi apparatus membrane. It is found in the cell membrane. Plays a role in the regulation of cell proliferation. Promotes activation of the AKT1 signaling pathway. Promotes phosphorylation of AKT1 at 'Ser-473'. The sequence is that of Dynactin-associated protein (DYNAP) from Homo sapiens (Human).